A 154-amino-acid chain; its full sequence is Ribonuclease H (154 aa).

The RNase H type-1 domain maps to 1–142 (MTKQVEIFTD…CDELAREGAN (142 aa)). The Mg(2+) site is built by Asp10, Glu48, Asp70, and Asp134.

This sequence belongs to the RNase H family. Monomer. Mg(2+) serves as cofactor.

It localises to the cytoplasm. The catalysed reaction is Endonucleolytic cleavage to 5'-phosphomonoester.. Endonuclease that specifically degrades the RNA of RNA-DNA hybrids. The protein is Ribonuclease H of Yersinia enterocolitica serotype O:8 / biotype 1B (strain NCTC 13174 / 8081).